Here is a 1353-residue protein sequence, read N- to C-terminus: Adenylate cyclase type 9 (1353 aa).

2 disordered regions span residues 1-27 and 51-73; these read MASS…DSNS and SSSC…GGRL. Over 1–117 the chain is Cytoplasmic; that stretch reads MASSPHQQLL…CFPQTQRRFR (117 aa). The segment covering 16–27 has biased composition (polar residues); that stretch reads EVSCDSSGDSNS. The span at 51-66 shows a compositional bias: low complexity; sequence SSSCSSSGDSGGLPRR. A helical transmembrane segment spans residues 118-138; sequence YALFYVGFACLLWSIYFAVHM. Over 139 to 141 the chain is Extracellular; it reads KSK. Residues 142-162 form a helical membrane-spanning segment; it reads VIVMVVPALCFLVVCVGFFLF. The Cytoplasmic segment spans residues 163–171; the sequence is TFTKLYARH. Residues 172–192 traverse the membrane as a helical segment; that stretch reads YAWTSLALTLLVFALTLAAQF. Residues 193–215 lie on the Extracellular side of the membrane; that stretch reads QVWTPLSGRVDSSNHTLTATPAD. Asn-206 carries N-linked (GlcNAc...) asparagine glycosylation. Residues 216 to 235 form a helical membrane-spanning segment; the sequence is TCLSQVGSFSICIEVLLLLY. Residues 236 to 241 lie on the Cytoplasmic side of the membrane; sequence TVMQLP. A helical transmembrane segment spans residues 242 to 259; sequence LYLSLFLGVVYSVLFETF. Residues 260–280 lie on the Extracellular side of the membrane; the sequence is GYHFRNEDCYPSPGPGALHWE. A helical membrane pass occupies residues 281 to 301; sequence LLSRALLHVCIHAIGIHLFVM. Over 302-786 the chain is Cytoplasmic; that stretch reads SQVRSRSTFL…VKTFASATFS (485 aa). A disordered region spans residues 349-375; the sequence is QGDEESENSVKRHATSSPKNRKKKSSI. The span at 359–374 shows a compositional bias: basic residues; sequence KRHATSSPKNRKKKSS. 3 residues coordinate Mg(2+): Asp-399, Ile-400, and Asp-443. ATP is bound by residues 399–404, 441–443, and Arg-487; these read DIVGFT and LGD. 2 disordered regions span residues 596–615 and 641–685; these read DSRE…GSVS and SEAG…EEKL. Phosphoserine is present on residues Ser-610 and Ser-613. The span at 661-676 shows a compositional bias: polar residues; the sequence is STKASGGPNSKTQNGL. Ser-688, Ser-691, and Ser-706 each carry phosphoserine. Residues 787–807 traverse the membrane as a helical segment; sequence SLLDVFLSTTVFLILSITCFL. Over 808–818 the chain is Extracellular; that stretch reads KYGATATPPPP. Residues 819-839 traverse the membrane as a helical segment; sequence AALAVFGADLLLEVLSLIVSI. Residues 840–867 lie on the Cytoplasmic side of the membrane; it reads RMVFFLEDVMTCTKWLLEWIAGWLPRHC. Residues 868 to 888 form a helical membrane-spanning segment; sequence IGAILVSLPALAVYSHITSEF. Residues 889 to 891 lie on the Extracellular side of the membrane; it reads ETN. A helical transmembrane segment spans residues 892–912; sequence IHVTMFTGSAVLVAVVHYCNF. Over 913–920 the chain is Cytoplasmic; sequence CQLSSWMR. A helical transmembrane segment spans residues 921–941; that stretch reads SSLATIVGAGLLLLLHISLCQ. The Extracellular segment spans residues 942 to 975; that stretch reads DSSIVMSPLDSAQNFSAQRNPCNSSVLQDGRRPA. 2 N-linked (GlcNAc...) asparagine glycosylation sites follow: Asn-955 and Asn-964. The chain crosses the membrane as a helical span at residues 976–996; that stretch reads SLIGKELILTFFLLLLLVWFL. Residues 997–1353 lie on the Cytoplasmic side of the membrane; that stretch reads NREFEVSYRL…LSKLNVSKSV (357 aa). ATP-binding positions include Lys-1108, 1185 to 1187, 1192 to 1196, and Lys-1232; these read DIW and NIASR. 5 positions are modified to phosphoserine: Ser-1257, Ser-1259, Ser-1295, Ser-1307, and Ser-1332. The disordered stretch occupies residues 1290–1314; sequence KASLGSDDSTQAKEARLSSKRSWRE. Basic and acidic residues predominate over residues 1299–1314; sequence TQAKEARLSSKRSWRE.

Belongs to the adenylyl cyclase class-4/guanylyl cyclase family. The cofactor is Mg(2+). Mn(2+) is required as a cofactor. Detected in brain, spleen, lung, liver and testis (at protein level). Detected in brain, especially in hippocampus, cerebellum and neocortex. Found in decreasing order in skeletal muscle, heart, adrenal gland, ovary and brain; and to a lesser extent, in kidney, liver, testis, lung, thymus and spleen.

The protein resides in the cell membrane. The catalysed reaction is ATP = 3',5'-cyclic AMP + diphosphate. With respect to regulation, insensitive to calcium/calmodulin, forskolin and somatostatin. Stimulated by beta-adrenergic receptor activation. Activity is down-regulated by calcium/calcineurin. Its function is as follows. Adenylyl cyclase that catalyzes the formation of the signaling molecule cAMP in response to activation of G protein-coupled receptors. Contributes to signaling cascades activated by CRH (corticotropin-releasing factor), corticosteroids and by beta-adrenergic receptors. This Mus musculus (Mouse) protein is Adenylate cyclase type 9 (Adcy9).